The primary structure comprises 142 residues: Glia maturation factor gamma (142 aa).

Ser2 is modified (N-acetylserine). The ADF-H domain maps to 4–139 (SLVVCEVDPE…TETWLKEKLA (136 aa)).

It belongs to the actin-binding proteins ADF family. GMF subfamily.

The polypeptide is Glia maturation factor gamma (Gmfg) (Mus musculus (Mouse)).